Reading from the N-terminus, the 124-residue chain is Magnetosome protein MamC (124 aa).

The Cytoplasmic portion of the chain corresponds to 2 to 8 (PFHLAPY). Residues 9-29 (LAKSVPGVGVLGALVGGAAAL) form a helical membrane-spanning segment. Topologically, residues 30-64 (AKNVRLLKEKRITNTEAAIDTGKETVGAGLATALS) are lumenal. The MIC, when fused with the C-terminus of maltose-binding protein (MBP) or expressed as a fragment, improves quality of iron particles during precipitation experiments, binds magnetite stretch occupies residues 36-56 (LKEKRITNTEAAIDTGKETVG). A helical transmembrane segment spans residues 65–85 (AVAATAVGGGLVVSLGTALVA). Residues 86-124 (GVAAKYAWDRGVDLVEKELNRGKAANGASDEDILRDELA) lie on the Cytoplasmic side of the membrane.

Belongs to the magnetosome MamC family. Probably interacts with MamA.

Its subcellular location is the magnetosome membrane. In terms of biological role, probably involved in magnetite crystal growth. The lumenal domain may bind the magnetite crystals, affecting crystal size and shape. The polypeptide is Magnetosome protein MamC (Paramagnetospirillum magneticum (strain ATCC 700264 / AMB-1) (Magnetospirillum magneticum)).